The sequence spans 103 residues: Putative membrane protein insertion efficiency factor (103 aa).

This sequence belongs to the UPF0161 family.

The protein localises to the cell inner membrane. Functionally, could be involved in insertion of integral membrane proteins into the membrane. The sequence is that of Putative membrane protein insertion efficiency factor from Chlamydia abortus (strain DSM 27085 / S26/3) (Chlamydophila abortus).